The sequence spans 248 residues: Tetraspanin-18 (248 aa).

The Cytoplasmic portion of the chain corresponds to 1-13 (MEGDCLSCMKYLM). A helical membrane pass occupies residues 14 to 34 (FVFNFFIFLGGACLLAIGIWV). Over 35 to 49 (MVDPTGFREIVAANP) the chain is Extracellular. A helical membrane pass occupies residues 50 to 70 (LLLTGAYILLAMGGLLFLLGF). Residues 71–83 (LGCCGAVRENKCL) are Cytoplasmic-facing. A helical membrane pass occupies residues 84-104 (LLFFFLFILIIFLAELSAAIL). Topologically, residues 105 to 223 (AFIFRENLTR…TFETYVYLAG (119 aa)) are extracellular. Residues Asn-111 and Asn-129 are each glycosylated (N-linked (GlcNAc...) asparagine). A helical transmembrane segment spans residues 224 to 244 (ALAIGVLAIELFAMIFAMCLF). Residues 245–248 (RGIQ) lie on the Cytoplasmic side of the membrane.

This sequence belongs to the tetraspanin (TM4SF) family. As to quaternary structure, interacts with ORAI1; this interaction regulates ORAI1 exit from the endoplasmic (ER), and/or Golgi, and trafficking to the cell surface. Highly expressed in primary endothelial cells. Expressed in the embryo heart. Weakly expressed the embryo skeletal muscle.

It is found in the membrane. Plays a role in the cell surface localization of ORAI1 and may participate in the regulation of Ca(2+) signaling and the VWF release in response to inflammatory stimuli. This Homo sapiens (Human) protein is Tetraspanin-18.